The following is a 595-amino-acid chain: NADPH-dependent diflavin oxidoreductase 1 (595 aa).

Positions 6-150 (VLVLYGSQTG…VIDPWLLSFW (145 aa)) constitute a Flavodoxin-like domain. Residues 12–17 (SQTGTA), 59–62 (ATTG), 97–106 (LGDSSYPKFN), and aspartate 132 each bind FMN. An FAD-binding FR-type domain is found at 204 to 444 (LRPFPAPLVF…WVKKGSLKFP (241 aa)). FAD is bound by residues arginine 348, 380 to 383 (RSFS), and 414 to 417 (GLCS). NADP(+) is bound by residues threonine 458, 513–514 (SR), and 519–523 (KVYVQ). Tryptophan 594 serves as a coordination point for FAD.

It belongs to the NADPH-dependent diflavin oxidoreductase NDOR1 family. The protein in the N-terminal section; belongs to the flavodoxin family. This sequence in the C-terminal section; belongs to the flavoprotein pyridine nucleotide cytochrome reductase family. In terms of assembly, interacts with ciapin1; as part of the cytosolic iron-sulfur (Fe-S) protein assembly (CIA) machinery. The cofactor is FAD. FMN serves as cofactor.

The protein resides in the cytoplasm. Its subcellular location is the perinuclear region. It catalyses the reaction 2 oxidized [2Fe-2S]-[protein] + NADPH = 2 reduced [2Fe-2S]-[protein] + NADP(+) + H(+). Functionally, NADPH-dependent reductase which is a central component of the cytosolic iron-sulfur (Fe-S) protein assembly (CIA) machinery. Transfers electrons from NADPH via its FAD and FMN prosthetic groups to the [2Fe-2S] cluster of ciapin1, another key component of the CIA machinery. In turn, this reduced cluster provides electrons for assembly of cytosolic iron-sulfur cluster proteins. It can also reduce the [2Fe-2S] cluster of cisd1 and activate this protein implicated in Fe/S cluster repair. This chain is NADPH-dependent diflavin oxidoreductase 1, found in Danio rerio (Zebrafish).